Consider the following 285-residue polypeptide: Type II secretion system protein C (285 aa).

The Cytoplasmic portion of the chain corresponds to 1 to 27 (MARLQAFKDPSFHSLVATFRSLPLIRR). Residues 28–48 (FVLGLILLLICQQLAVLTWRF) form a helical membrane-spanning segment. The Periplasmic segment spans residues 49-285 (LLPEDSRIVG…DIYLALDGDH (237 aa)).

The protein belongs to the GSP C family.

Its subcellular location is the cell inner membrane. In terms of biological role, involved in a type II secretion system (T2SS, formerly general secretion pathway, GSP) for the export of proteins. Required for the translocation of the multiple pectic enzymes. The chain is Type II secretion system protein C (outC) from Pectobacterium carotovorum subsp. carotovorum (Erwinia carotovora subsp. carotovora).